Consider the following 165-residue polypeptide: Alanine- and arginine-rich domain-containing protein (165 aa).

Residues 136–165 (QQLKKRQDQERASKPQSPQDEEMNPECGNA) are disordered.

This is Alanine- and arginine-rich domain-containing protein (Aard) from Rattus norvegicus (Rat).